The following is a 458-amino-acid chain: MNISQIPLQVEALIPEITLTGFASLILLAGLLKLKNEVLVWSSVLFLVIFAFFIPSFEGEAFNGMFLNDFLTIYLKLIIIIGTIISLLVLTSYLKEKLIRFNESIAFILFSALGMMLLVSARELISFFLSFELMSLSIYVLVGIRRYDVKSNEAAVKYFMLGGFSSAIMLFGIAFIYGATNTTELSLILKVISNYNPLILIGLGLFIVGLCFKIALVPFHMWAPDVYEGAPTPVTAFISTLPKVAILGAFGRVLVEIFRDYYIDWSNFLIVLSIATMATGNFFALIQKNIKRMLAYSSIAHAGYIIIGVIVGTQSGFNSVVAYMFIYTLMNIGAFAMVIAFNEESIENYKGLHKFHPALAIAMLIFMFSLTGVPPTAGFIVKFNIFLQAVKAGFTWLVVIAVIFTVISAYYYLRIVMYMYMKEPVKLPEPIYSRELEVAILICTIGVTFLGILPLFLI.

The next 14 helical transmembrane spans lie at 12 to 32, 37 to 57, 70 to 90, 101 to 121, 124 to 144, 159 to 179, 199 to 219, 230 to 250, 266 to 286, 293 to 313, 321 to 341, 361 to 381, 393 to 413, and 438 to 458; these read ALIPEITLTGFASLILLAGLL, EVLVWSSVLFLVIFAFFIPSF, FLTIYLKLIIIIGTIISLLVL, FNESIAFILFSALGMMLLVSA, LISFFLSFELMSLSIYVLVGI, FMLGGFSSAIMLFGIAFIYGA, ILIGLGLFIVGLCFKIALVPF, APTPVTAFISTLPKVAILGAF, SNFLIVLSIATMATGNFFALI, MLAYSSIAHAGYIIIGVIVGT, VAYMFIYTLMNIGAFAMVIAF, IAMLIFMFSLTGVPPTAGFIV, GFTWLVVIAVIFTVISAYYYL, and VAILICTIGVTFLGILPLFLI.

This sequence belongs to the complex I subunit 2 family. As to quaternary structure, NDH-1 is composed of 14 different subunits. Subunits NuoA, H, J, K, L, M, N constitute the membrane sector of the complex.

It localises to the cell inner membrane. The catalysed reaction is a quinone + NADH + 5 H(+)(in) = a quinol + NAD(+) + 4 H(+)(out). Its function is as follows. NDH-1 shuttles electrons from NADH, via FMN and iron-sulfur (Fe-S) centers, to quinones in the respiratory chain. The immediate electron acceptor for the enzyme in this species is believed to be ubiquinone. Couples the redox reaction to proton translocation (for every two electrons transferred, four hydrogen ions are translocated across the cytoplasmic membrane), and thus conserves the redox energy in a proton gradient. This is NADH-quinone oxidoreductase subunit N 1 from Thermodesulfovibrio yellowstonii (strain ATCC 51303 / DSM 11347 / YP87).